We begin with the raw amino-acid sequence, 95 residues long: Cell division protein FtsB (95 aa).

Over 1-3 (MKW) the chain is Cytoplasmic. The chain crosses the membrane as a helical span at residues 4-21 (VTGLLVVLLLGLQYKLWI). Topologically, residues 22–95 (GEGSVAEVWQ…QVVGRPGETP (74 aa)) are periplasmic. The stretch at 26–73 (VAEVWQLRQTLEAQRAENEELRYRNAALDAEVTDLKTGLDAIEERARR) forms a coiled coil.

Belongs to the FtsB family. Part of a complex composed of FtsB, FtsL and FtsQ.

Its subcellular location is the cell inner membrane. Its function is as follows. Essential cell division protein. May link together the upstream cell division proteins, which are predominantly cytoplasmic, with the downstream cell division proteins, which are predominantly periplasmic. This chain is Cell division protein FtsB, found in Thioalkalivibrio sulfidiphilus (strain HL-EbGR7).